Here is a 350-residue protein sequence, read N- to C-terminus: tRNA uridine(34) hydroxylase (350 aa).

In terms of domain architecture, Rhodanese spans 146–240 (DDPDAVFIDM…YARRARAQGL (95 aa)). The active-site Cysteine persulfide intermediate is the C200. The segment covering 319–328 (RRRRAGRENG) has biased composition (basic and acidic residues). Residues 319-350 (RRRRAGRENGNKIFNKSRGRLNSKLSIPDPAE) form a disordered region.

This sequence belongs to the TrhO family.

The enzyme catalyses uridine(34) in tRNA + AH2 + O2 = 5-hydroxyuridine(34) in tRNA + A + H2O. Functionally, catalyzes oxygen-dependent 5-hydroxyuridine (ho5U) modification at position 34 in tRNAs. The sequence is that of tRNA uridine(34) hydroxylase from Salmonella newport (strain SL254).